Here is a 305-residue protein sequence, read N- to C-terminus: Putative S-adenosyl-L-methionine-dependent methyltransferase MAB_3787 (305 aa).

S-adenosyl-L-methionine contacts are provided by residues Asp132 and 161 to 162 (DL).

It belongs to the UPF0677 family.

In terms of biological role, exhibits S-adenosyl-L-methionine-dependent methyltransferase activity. The sequence is that of Putative S-adenosyl-L-methionine-dependent methyltransferase MAB_3787 from Mycobacteroides abscessus (strain ATCC 19977 / DSM 44196 / CCUG 20993 / CIP 104536 / JCM 13569 / NCTC 13031 / TMC 1543 / L948) (Mycobacterium abscessus).